We begin with the raw amino-acid sequence, 260 residues long: Indole-3-glycerol phosphate synthase (260 aa).

The protein belongs to the TrpC family.

The enzyme catalyses 1-(2-carboxyphenylamino)-1-deoxy-D-ribulose 5-phosphate + H(+) = (1S,2R)-1-C-(indol-3-yl)glycerol 3-phosphate + CO2 + H2O. Its pathway is amino-acid biosynthesis; L-tryptophan biosynthesis; L-tryptophan from chorismate: step 4/5. In Neisseria gonorrhoeae (strain ATCC 700825 / FA 1090), this protein is Indole-3-glycerol phosphate synthase.